Consider the following 324-residue polypeptide: Probable WRKY transcription factor 53 (324 aa).

The interval 93-126 (NPGSVPESPASINGSPRSEEFADGGGSSESHHRQ) is disordered. Positions 152 to 220 (GLEGPQDDVF…YRGTHTCSQA (69 aa)) form a DNA-binding region, WRKY.

This sequence belongs to the WRKY group III family. Interacts with ESR/ESP and UPL5. Binds to WRKY30. Post-translationally, ubiquitinated by UPL5. Ubiquitination leads to its subsequent degradation, thus controlling the timing of leaf senescence.

The protein localises to the nucleus. Transcription factor. Interacts specifically with the W box (5'-(T)TGAC[CT]-3'), a frequently occurring elicitor-responsive cis-acting element. May regulate the early events of leaf senescence. Negatively regulates the expression of ESR/ESP. Together with WRKY46 and WRKY70, promotes resistance to P.syringae, probably by enhancing salicylic acid (SA)- dependent genes. Contributes to the suppression of jasmonic acid (MeJA)-induced expression of PDF1.2. The protein is Probable WRKY transcription factor 53 of Arabidopsis thaliana (Mouse-ear cress).